We begin with the raw amino-acid sequence, 364 residues long: Aminomethyltransferase (364 aa).

This sequence belongs to the GcvT family. In terms of assembly, the glycine cleavage system is composed of four proteins: P, T, L and H.

The enzyme catalyses N(6)-[(R)-S(8)-aminomethyldihydrolipoyl]-L-lysyl-[protein] + (6S)-5,6,7,8-tetrahydrofolate = N(6)-[(R)-dihydrolipoyl]-L-lysyl-[protein] + (6R)-5,10-methylene-5,6,7,8-tetrahydrofolate + NH4(+). In terms of biological role, the glycine cleavage system catalyzes the degradation of glycine. The chain is Aminomethyltransferase from Salmonella enteritidis PT4 (strain P125109).